Reading from the N-terminus, the 372-residue chain is Adaptive-response sensory kinase SasA (372 aa).

The region spanning 147-360 (MVAHELRTPL…CFHFTVPVWQ (214 aa)) is the Histidine kinase domain. Phosphohistidine; by autocatalysis is present on histidine 150.

As to quaternary structure, homooligomerizes. Interacts with KaiC. Participates in the KaiBC complex, whose core is composed of a KaiC homohexamer and 6 KaiB.

It carries out the reaction ATP + protein L-histidine = ADP + protein N-phospho-L-histidine.. Member of the two-component regulatory system SasA/RpaA involved in genome-wide circadian gene expression. One of several clock output pathways. Participates in the Kai clock protein complex, the main circadian regulator in cyanobacteria, via its interaction with KaiC. KaiC enhances the autophosphorylation activity of SasA, which then transfers its phosphate group to RpaA to activate it. In addition to its output function, recruits fold-shifted KaiB (KaiB(fs)) to KaiC to cooperatively form the KaiB(6):KaiC(6) complex (independent of SasA kinase activity). Required for robustness of the circadian rhythm of gene expression and is involved in clock output, also required for adaptation to light/dark cycles. The polypeptide is Adaptive-response sensory kinase SasA (Prochlorococcus marinus (strain MIT 9301)).